Consider the following 571-residue polypeptide: Coenzyme A biosynthesis protein 3 (571 aa).

Disordered regions lie at residues 1-72 and 100-120; these read MTDE…YKND and INTSMPANTNGQQKRFSPSLP. The segment covering 8 to 35 has biased composition (polar residues); the sequence is SDQNMNGKQGVNLISSLPTTQVPVSILT. Position 42 is a phosphoserine (Ser42). Residues 43 to 59 show a composition bias toward basic and acidic residues; that stretch reads IHDESNFERSDSHEDQS. Over residues 60 to 72 the composition is skewed to polar residues; the sequence is KSNSNRRNIYKND. Ser116, Ser121, and Ser124 each carry phosphoserine. Disordered stretches follow at residues 140 to 171 and 209 to 244; these read ISNKPGKQQQQQEQLQQNQQQEEQQKAQLQEQ and IFKENTTNDGTDIRKHSVSSGTSNSEDEVDSPSMEK. The segment covering 146–171 has biased composition (low complexity); the sequence is KQQQQQEQLQQNQQQEEQQKAQLQEQ. At Ser264 the chain carries Phosphoserine. Positions 507 to 571 are disordered; it reads RDEETGDKEQ…EDEEDVKTEV (65 aa). Acidic residues predominate over residues 516-571; that stretch reads QEQEEQEGADNEDDDDEDDEEDEEDEEEEEALNETASDESNDEEDEEDEEDVKTEV.

This sequence belongs to the HFCD (homooligomeric flavin containing Cys decarboxylase) superfamily. In terms of assembly, component of the phosphopantothenoylcysteine decarboxylase (PPCDC) complex, a heterotrimer composed of CAB3, HAL3 and VHS3.

It localises to the cytoplasm. Its function is as follows. Component of the phosphopantothenoylcysteine decarboxylase (PPCDC) involved in the coenzyme A synthesis. This chain is Coenzyme A biosynthesis protein 3 (CAB3), found in Saccharomyces cerevisiae (strain ATCC 204508 / S288c) (Baker's yeast).